Reading from the N-terminus, the 216-residue chain is Putative flagellar filament outer layer-like protein (216 aa).

The tract at residues 1-22 (MFAQDAAQTGEQTTQNQGENGN) is disordered. Over residues 8–22 (QTGEQTTQNQGENGN) the composition is skewed to low complexity.

The protein resides in the periplasmic flagellum. It is found in the periplasm. Its function is as follows. Might be part of the flagella. This Brachyspira hyodysenteriae (strain ATCC 49526 / WA1) protein is Putative flagellar filament outer layer-like protein (flaAL).